The sequence spans 219 residues: Large ribosomal subunit protein bL25 (219 aa).

The interval 195–219 (EETTTTETSNEPEVIKKGKKEEEEK) is disordered. The segment covering 197-206 (TTTTETSNEP) has biased composition (low complexity). Residues 207 to 219 (EVIKKGKKEEEEK) are compositionally biased toward basic and acidic residues.

The protein belongs to the bacterial ribosomal protein bL25 family. CTC subfamily. Part of the 50S ribosomal subunit; part of the 5S rRNA/L5/L18/L25 subcomplex. Contacts the 5S rRNA. Binds to the 5S rRNA independently of L5 and L18.

Its function is as follows. This is one of the proteins that binds to the 5S RNA in the ribosome where it forms part of the central protuberance. This chain is Large ribosomal subunit protein bL25, found in Fervidobacterium nodosum (strain ATCC 35602 / DSM 5306 / Rt17-B1).